The chain runs to 326 residues: DNA-directed RNA polymerase subunit alpha (326 aa).

Positions 1–231 (MQSNALLKPR…DQLSVFADLE (231 aa)) are alpha N-terminal domain (alpha-NTD). Positions 245–326 (IDPVLLRPVD…WPPAGLEKLG (82 aa)) are alpha C-terminal domain (alpha-CTD).

This sequence belongs to the RNA polymerase alpha chain family. As to quaternary structure, homodimer. The RNAP catalytic core consists of 2 alpha, 1 beta, 1 beta' and 1 omega subunit. When a sigma factor is associated with the core the holoenzyme is formed, which can initiate transcription.

It catalyses the reaction RNA(n) + a ribonucleoside 5'-triphosphate = RNA(n+1) + diphosphate. In terms of biological role, DNA-dependent RNA polymerase catalyzes the transcription of DNA into RNA using the four ribonucleoside triphosphates as substrates. This chain is DNA-directed RNA polymerase subunit alpha, found in Azoarcus sp. (strain BH72).